Reading from the N-terminus, the 296-residue chain is MIKKTTEIDAILLNLNKAIDAHYQWLVSMFHSVVARDASKPEITDNHSYGLCQFGRWIDHLGPLDNDELPYVRLMDSAHQHMHNCGRELMLAIVENHWQDAHFDAFQEGLLSFTAALTDYKIYLLTIRSNMDVLTGLPGRRVLDESFDHQLRNAEPLNLYLMLLDIDRFKLVNDTYGHLIGDVVLRTLATYLASWTRDYETVYRYGGEEFIIIVKAANDEEACRAGVRICQLVDNHAITHSEGHINITVTAGVSRAFPEEPLDVVIGRADRAMYEGKQTGRNRCMFIDEQNVINRV.

Zn(2+) is bound by residues His22, Cys52, His79, and His83. In terms of domain architecture, GGDEF spans Leu157–Glu289. Asp165 and Ile166 together coordinate Mg(2+). Substrate is bound by residues Asn173, His178, Asp182, and Trp195 to Glu200. Glu208 contributes to the Mg(2+) binding site. Glu208 acts as the Proton acceptor in catalysis. Substrate-binding residues include Lys215, Arg224, and Arg228.

In terms of assembly, homodimer. Mg(2+) is required as a cofactor.

It catalyses the reaction 2 GTP = 3',3'-c-di-GMP + 2 diphosphate. The protein operates within purine metabolism; 3',5'-cyclic di-GMP biosynthesis. With respect to regulation, allosterically regulated by zinc, which seems to regulate the activity of the catalytic GGDEF domains by impeding their mobility and thus preventing productive encounter of the two GTP substrates. Subject to product inhibition by c-di-GMP at a KI of 44 uM. Functionally, catalyzes the synthesis of cyclic-di-GMP (c-di-GMP) via the condensation of 2 GTP molecules. May act as a zinc sensor that controls, via c-di-GMP, post-translational events. Overexpression leads to a strong repression of swimming; swimming returnes to normal when residues 206-207 are both mutated to Ala. Overexpression also leads to a reduction in flagellar abundance and a 20-fold increase in c-di-GMP levels in vivo. Required for aminoglycoside-mediated induction of biofilm formation, it also plays a lesser role in biofilm production in response to other classes of translation inhibitors. The c-di-GMP produced by this enzyme up-regulates poly-GlcNAc production as well as the biofilm synthesis protein PgaD, although c-di-GMP is probably not the main inducing principle. C-di-GMP is a second messenger which controls cell surface-associated traits in bacteria. This is Diguanylate cyclase DgcZ from Escherichia coli (strain K12).